A 618-amino-acid polypeptide reads, in one-letter code: Phostensin (618 aa).

Basic and acidic residues predominate over residues 15–33 (RRQEEAAVRGREKAERERL). Positions 15 to 505 (RRQEEAAVRG…PATADAAVPG (491 aa)) are disordered. Residue Ser-54 is modified to Phosphoserine. The segment covering 96–109 (QQQQQQQQQQQQQQ) has biased composition (low complexity). 2 stretches are compositionally biased toward basic and acidic residues: residues 110 to 160 (RSEE…ERRL) and 173 to 197 (LESR…EVRK). Phosphoserine occurs at positions 131, 139, 181, and 201. The residue at position 205 (Thr-205) is a Phosphothreonine. Ser-231 carries the phosphoserine modification. 2 stretches are compositionally biased toward basic and acidic residues: residues 234–245 (DSDHEKLGLTDA) and 271–289 (SGEE…EERT). Residues 308-319 (EAAGSSSGGVEA) show a composition bias toward low complexity. Basic and acidic residues predominate over residues 348–358 (KVRDRTPRDTE). Positions 429–451 (RPPPAAPLSPPPPAPPAPQPPGD) are enriched in pro residues. A Phosphoserine modification is found at Ser-437. Lys-462 is modified (N6-acetyllysine). Residues 485 to 505 (APPAAAATPATPATADAAVPG) show a composition bias toward low complexity. Ser-535 is modified (phosphoserine). The interval 556–594 (YQYPSESSVLEELGPEPEAPSAPSPPAAQPDDEEDEEEL) is disordered. Residues 572–583 (PEAPSAPSPPAA) show a composition bias toward pro residues. Residues 585–594 (PDDEEDEEEL) show a composition bias toward acidic residues.

Interacts with Protein phosphatase 1 (PP1).

The protein resides in the cytoplasm. Its subcellular location is the cytoskeleton. Its function is as follows. May target protein phosphatase 1 to F-actin cytoskeleton. The protein is Phostensin (PPP1R18) of Sus scrofa (Pig).